Consider the following 224-residue polypeptide: Retinoschisin (224 aa).

The first 23 residues, 1 to 23 (MPHKIEGFFLLLLFGYEATLGLS), serve as a signal peptide directing secretion. Residues 63–219 (CPYHKPLGFE…IAIRMELLEC (157 aa)) enclose the F5/8 type C domain. Cystine bridges form between C63-C219 and C110-C142.

Homooctamer of 4 homodimers; disulfide-linked. The homooctamer has a flat, cogwheel structure with a diameter of about 14 nm. Two stacked octamers can assemble to form a hexadecamer. As to expression, detected in the eye cup. Detected in retina, in the inner segment of the photoreceptors, the inner nuclear layer, the inner plexiform layer and the ganglion cell layer (at protein level). Restricted to the retina. At the mRNA level, detected only within the photoreceptor cell layer, most prominently within the inner segments of the photoreceptors. Undetectable in the inner plexiform layers and the inner nuclear layer.

The protein localises to the secreted. The protein resides in the cell membrane. Functionally, binds negatively charged membrane lipids, such as phosphatidylserine and phosphoinositides. May play a role in cell-cell adhesion processes in the retina, via homomeric interaction between octamers present on the surface of two neighboring cells. Required for normal structure and function of the retina. This is Retinoschisin (Rs1) from Mus musculus (Mouse).